Consider the following 178-residue polypeptide: MLAAEEANPLIPDVWEMLITGIGFVILLFIAIKYIVPAFEKVFKDRADAIEGGLAKAKAAQAEAKAARDEYNQQLESARLEAQKIREEARSEGEKILADFKDRANMESARITENAHKAIEAERAAAVVSLRDEVGTLATQLASKIVGESLNDDDRANRVVDRFLADLDAEQGRTGAAR.

The chain crosses the membrane as a helical span at residues 19–39 (ITGIGFVILLFIAIKYIVPAF).

It belongs to the ATPase B chain family. F-type ATPases have 2 components, F(1) - the catalytic core - and F(0) - the membrane proton channel. F(1) has five subunits: alpha(3), beta(3), gamma(1), delta(1), epsilon(1). F(0) has three main subunits: a(1), b(2) and c(10-14). The alpha and beta chains form an alternating ring which encloses part of the gamma chain. F(1) is attached to F(0) by a central stalk formed by the gamma and epsilon chains, while a peripheral stalk is formed by the delta and b chains.

Its subcellular location is the cell membrane. In terms of biological role, f(1)F(0) ATP synthase produces ATP from ADP in the presence of a proton or sodium gradient. F-type ATPases consist of two structural domains, F(1) containing the extramembraneous catalytic core and F(0) containing the membrane proton channel, linked together by a central stalk and a peripheral stalk. During catalysis, ATP synthesis in the catalytic domain of F(1) is coupled via a rotary mechanism of the central stalk subunits to proton translocation. Component of the F(0) channel, it forms part of the peripheral stalk, linking F(1) to F(0). This Kocuria rhizophila (strain ATCC 9341 / DSM 348 / NBRC 103217 / DC2201) protein is ATP synthase subunit b.